A 252-amino-acid polypeptide reads, in one-letter code: MSGHSKWHTIRRTKGVNDQRRGQLFTKLARDITIATREGGSGDPDLNFRLRLAIEKARANNMPNENIQRAIDRGLGKSNEAALEEIFYEGYGPGGVAILIEAATDNRNRTNSEVRATFNKNGGNPGEPGSVSWMFEQKGLITIDLSAVKHDPDELQLMAIDAGADDVVVDDETLEIYCDWTQLNAIRQALLDQGVPVANAEKIMRAKTLIQPDEKDALAALRLIEKLEDLDDVQKVYSNLDITAELVARFDA.

The segment covering 1–14 has biased composition (basic residues); the sequence is MSGHSKWHTIRRTK. A disordered region spans residues 1–22; the sequence is MSGHSKWHTIRRTKGVNDQRRG.

Belongs to the TACO1 family.

The protein localises to the cytoplasm. This is Probable transcriptional regulatory protein Caur_1043 from Chloroflexus aurantiacus (strain ATCC 29366 / DSM 635 / J-10-fl).